Reading from the N-terminus, the 308-residue chain is Probable manganese-dependent inorganic pyrophosphatase (308 aa).

Mn(2+) contacts are provided by His-9, Asp-13, Asp-15, Asp-75, His-97, and Asp-149.

Belongs to the PPase class C family. Mn(2+) serves as cofactor.

The protein resides in the cytoplasm. The catalysed reaction is diphosphate + H2O = 2 phosphate + H(+). This is Probable manganese-dependent inorganic pyrophosphatase from Staphylococcus carnosus (strain TM300).